We begin with the raw amino-acid sequence, 425 residues long: Gamma-glutamyl phosphate reductase (425 aa).

It belongs to the gamma-glutamyl phosphate reductase family.

Its subcellular location is the cytoplasm. It catalyses the reaction L-glutamate 5-semialdehyde + phosphate + NADP(+) = L-glutamyl 5-phosphate + NADPH + H(+). The protein operates within amino-acid biosynthesis; L-proline biosynthesis; L-glutamate 5-semialdehyde from L-glutamate: step 2/2. In terms of biological role, catalyzes the NADPH-dependent reduction of L-glutamate 5-phosphate into L-glutamate 5-semialdehyde and phosphate. The product spontaneously undergoes cyclization to form 1-pyrroline-5-carboxylate. The sequence is that of Gamma-glutamyl phosphate reductase from Novosphingobium aromaticivorans (strain ATCC 700278 / DSM 12444 / CCUG 56034 / CIP 105152 / NBRC 16084 / F199).